A 4652-amino-acid polypeptide reads, in one-letter code: Low-density lipoprotein receptor-related protein 2 (4652 aa).

An N-terminal signal peptide occupies residues 1–25 (MERWAAAAACTLLLAFAACLAPASG). Over 26–4422 (RECLGNEFRC…SKGISPGTTV (4397 aa)) the chain is Extracellular. LDL-receptor class A domains lie at 27–63 (ECLG…IGCP), 66–104 (TCGS…QRCP), 108–144 (TCSS…INCR), 142–181 (NCRY…LNCT), 183–219 (RCLR…HSCS), 223–259 (PCKG…DGCE), and 267–308 (ECYP…RVCD). 21 disulfides stabilise this stretch: C28–C40, C35–C53, C47–C62, C67–C80, C74–C93, C87–C103, C109–C121, C116–C134, C128–C143, C143–C158, C153–C171, C165–C180, C184–C196, C191–C209, C203–C218, C224–C236, C231–C249, C243–C258, C268–C281, C275–C294, and C288–C307. N160 and N179 each carry an N-linked (GlcNAc...) asparagine glycan. N341 carries N-linked (GlcNAc...) asparagine glycosylation. Positions 348–386 (DFNDCQIWGICDHFCEDRIGHHQCFCAEGYVLEHEQHCR) constitute an EGF-like 1; calcium-binding domain. Disulfide bonds link C352-C362, C358-C371, and C373-C385. An N-linked (GlcNAc...) asparagine glycan is attached at N388. 8 LDL-receptor class B repeats span residues 436 to 478 (SKVF…DWIN), 479 to 521 (NKLY…DPTV), 522 to 568 (GYLF…DLVA), 569 to 613 (KRVY…FEDN), 753 to 795 (NAIF…DWIS), 796 to 837 (RNLY…HPIA), 838 to 881 (GYIF…DWGS), and 882 to 925 (SRLY…FGEY). N771 is a glycosylation site (N-linked (GlcNAc...) asparagine). Residue N866 is glycosylated (N-linked (GlcNAc...) asparagine). Residue N1015 is glycosylated (N-linked (GlcNAc...) asparagine). Positions 1025–1061 (QCGALSFPCNNGRCVPLHYRCDGVDDCHDNSDEVQCG) constitute an LDL-receptor class A 8 domain. 3 disulfide bridges follow: C1026/C1038, C1033/C1051, and C1045/C1060. N-linked (GlcNAc...) asparagine glycosylation occurs at N1064. 7 consecutive LDL-receptor class A domains span residues 1066–1104 (SCAP…QNCS), 1110–1146 (SCRA…KRCD), 1150–1186 (TCSP…SACV), 1188–1225 (NCTD…IDCP), 1231–1269 (MCRQ…SGCP), 1272–1308 (TCPX…KDCP), and 1313–1351 (LCPS…PLCN). 9 disulfides stabilise this stretch: C1067–C1081, C1074–C1094, C1088–C1103, C1111–C1123, C1118–C1136, C1130–C1145, C1151–C1163, C1158–C1176, and C1170–C1185. N1102 carries N-linked (GlcNAc...) asparagine glycosylation. Residues W1128, D1131, D1133, D1135, D1141, and E1142 each coordinate Ca(2+). N-linked (GlcNAc...) asparagine glycosylation occurs at N1188. Cystine bridges form between C1189/C1202, C1196/C1215, C1209/C1224, C1232/C1245, C1239/C1258, C1252/C1268, C1273/C1285, C1280/C1298, C1292/C1307, C1314/C1327, C1321/C1340, and C1334/C1350. Ca(2+) is bound by residues Y1207, D1210, V1212, D1214, D1220, and E1221. An N-linked (GlcNAc...) asparagine glycan is attached at N1329. N-linked (GlcNAc...) asparagine glycosylation is found at N1385, N1452, N1498, and N1552. 10 LDL-receptor class B repeats span residues 1480-1522 (GRIF…DWVG), 1523-1565 (RNLY…DPRV), 1568-1611 (RVIF…DYPT), 1612-1654 (RLLY…TIFE), 1655-1696 (DSIY…VHPA), 1789-1831 (QFLY…DWLS), 1832-1881 (RNLY…DPAK), 1882-1929 (GKLY…DIQE), 1930-1971 (QKLY…YGPY), and 1972-2012 (LYYA…YRRR). N-linked (GlcNAc...) asparagine glycosylation is found at N1677 and N1809. N2053 carries N-linked (GlcNAc...) asparagine glycosylation. LDL-receptor class B repeat units follow at residues 2105-2154 (GFVY…DWVA), 2155-2199 (GNLY…DPKN), 2200-2243 (RYLF…DHNS), 2244-2287 (GYIY…FGNS), 2429-2475 (NRIY…DWIG), 2476-2516 (RRIY…DPCQ), 2517-2560 (GYMY…DYKE), 2561-2602 (NLLY…YGQY), and 2603-2644 (IYWT…VVNN). Residues N2175 and N2222 are each glycosylated (N-linked (GlcNAc...) asparagine). N-linked (GlcNAc...) asparagine glycosylation occurs at N2485. LDL-receptor class A domains follow at residues 2696–2734 (RCNS…TLCA), 2737–2773 (TCPP…SGCR), 2776–2815 (SCNI…KNCA), 2818–2857 (TCLP…IYCV), 2860–2897 (TCKN…ATCV), 2902–2941 (TCSS…HHCE), 2944–2986 (NCSS…QNCT), 2989–3025 (NCSG…RNCK), 3028–3066 (ACDE…HLCH), and 3071–3107 (TCPP…ERCG). 18 disulfides stabilise this stretch: C2697/C2709, C2704/C2722, C2716/C2733, C2738/C2750, C2745/C2763, C2757/C2772, C2777/C2790, C2785/C2803, C2797/C2814, C2819/C2832, C2826/C2845, C2839/C2856, C2861/C2873, C2868/C2886, C2880/C2896, C2903/C2915, C2910/C2928, and C2922/C2940. Residue N2698 is glycosylated (N-linked (GlcNAc...) asparagine). A glycan (N-linked (GlcNAc...) asparagine) is linked at N2778. N2806 and N2807 each carry an N-linked (GlcNAc...) asparagine glycan. N-linked (GlcNAc...) asparagine glycosylation occurs at N2944. Cystine bridges form between C2945–C2962, C2952–C2975, and C2969–C2985. N-linked (GlcNAc...) asparagine glycans are attached at residues N2984 and N2989. 9 disulfides stabilise this stretch: C2990–C3002, C2997–C3015, C3009–C3024, C3029–C3041, C3036–C3054, C3048–C3065, C3072–C3084, C3079–C3097, and C3091–C3106. N-linked (GlcNAc...) asparagine glycosylation is present at N3122. The 41-residue stretch at 3149–3189 (DIDECKETPSVCSQKCENLLGSYICKCAPGYTREPDGRSCR) folds into the EGF-like 2; calcium-binding domain. Disulfide bonds link C3153-C3164, C3160-C3173, and C3175-C3188. 4 N-linked (GlcNAc...) asparagine glycosylation sites follow: N3208, N3254, N3312, and N3352. LDL-receptor class B repeat units follow at residues 3236-3278 (ERLY…DWVT), 3279-3321 (RKLY…DKPR), 3330-3373 (GYVY…DYTN), 3374-3417 (DLLY…FEDT), and 3418-3458 (IYWT…YHPY). N-linked (GlcNAc...) asparagine glycans are attached at residues N3435 and N3444. 9 LDL-receptor class A domains span residues 3509–3547 (MCSS…NTCP), 3550–3588 (FCRL…VLCE), 3591–3629 (RCES…SHCA), 3632–3670 (TCLP…QECM), 3675–3713 (RCDN…QNCE), 3716–3753 (TCKP…ENCV), 3756–3792 (QCSE…RDCE), 3795–3831 (TCHP…ATCP), and 3839–3877 (YCPA…HLCL). Intrachain disulfides connect C3510/C3523, C3517/C3536, C3530/C3546, C3551/C3563, C3558/C3576, C3570/C3587, C3592/C3604, C3599/C3617, C3611/C3628, C3633/C3645, C3640/C3658, C3652/C3669, C3676/C3690, C3684/C3703, C3697/C3712, C3717/C3730, C3725/C3743, C3737/C3752, C3757/C3769, C3764/C3782, C3776/C3791, C3796/C3808, C3803/C3821, C3815/C3830, C3840/C3852, C3847/C3865, and C3859/C3876. N3562 carries N-linked (GlcNAc...) asparagine glycosylation. The N-linked (GlcNAc...) asparagine glycan is linked to N3678. The N-linked (GlcNAc...) asparagine glycan is linked to N3878. LDL-receptor class A domains lie at 3880–3919 (TCDL…ENCL) and 3925–3961 (PCTE…TGCN). 12 disulfide bridges follow: C3881–C3894, C3889–C3907, C3901–C3918, C3926–C3938, C3933–C3951, C3945–C3960, C3968–C3977, C3973–C3987, C3989–C4003, C4009–C4019, C4015–C4028, and C4030–C4045. One can recognise an EGF-like 3 domain in the interval 3964 to 4004 (EERSCAENLCEHNCTQLIGGGFICSCRPGFKASSLNRNSCE). A glycan (N-linked (GlcNAc...) asparagine) is linked at N3976. Residues 4005-4046 (DINECEQFGVCPQNCHNTKGSYECTCAEGFRSMSEHYGERCA) enclose the EGF-like 4; calcium-binding domain. Residue N4066 is glycosylated (N-linked (GlcNAc...) asparagine). LDL-receptor class B repeat units lie at residues 4152–4194 (RHIY…NPKQ), 4195–4238 (GLMY…DYVN), and 4240–4281 (DRIY…FESQ). N4325 carries an N-linked (GlcNAc...) asparagine glycan. The region spanning 4375-4409 (MPPPCRCMNEGNCYFDKNNLPKCKCPSGYMGEYCE) is the EGF-like 5 domain. 3 disulfides stabilise this stretch: C4379–C4387, C4381–C4397, and C4399–C4408. Residues 4423 to 4443 (AVLVTLILIIIIGGLVALGFF) form a helical membrane-spanning segment. The Cytoplasmic segment spans residues 4444–4652 (HYRKTGSILI…ANLVREDSEA (209 aa)). The SH3-binding motif lies at 4450–4459 (SILISMPRLP). Residues 4453-4458 (ISMPRL) carry the PxLPxI/L motif 1; mediates interaction with ANKRA2 motif. The PxLPxI/L motif 2; mediates interaction with ANKRA2 signature appears at 4456-4461 (PRLPSL). A Phosphoserine modification is found at S4460. An Endocytosis signal motif is present at residues 4518 to 4523 (FENPMY). Residues 4536 to 4553 (TTTQVSESGNVYNKNYGS) are compositionally biased toward polar residues. The disordered stretch occupies residues 4536-4652 (TTTQVSESGN…ANLVREDSEA (117 aa)). S4568 is subject to Phosphoserine. Residues 4588–4601 (QNTNFENPIYAETE) form an interaction with DAB2 region. The NPXY motif motif lies at 4594–4597 (NPIY). The short motif at 4597 to 4600 (YAET) is the SH2-binding element. The short motif at 4610 to 4621 (VTPPPSPSPPAK) is the SH3-binding element. S4615 is subject to Phosphoserine. A compositionally biased stretch (polar residues) spans 4626–4636 (KGTTPAYSATE). T4629 is modified (phosphothreonine). The residue at position 4650 (S4650) is a Phosphoserine.

Belongs to the LDLR family. Binds plasminogen, extracellular matrix components, plasminogen activator-plasminogen activator inhibitor type I complex, apolipoprotein E-enriched beta-VLDL, lipoprotein lipase, lactoferrin, CLU/clusterin and calcium. Forms a multimeric complex together with LRPAP1. Interacts (via PxLPxI/L motif) with ANKRA2 (via ankyrin repeats). Interacts with LRP2BP. Interacts (via NPXY motif) with DAB2; the interaction is not affected by tyrosine phosphorylation of the NPXY motif. Interacts with MB. Interacts with BMP4. Interacts with the Sonic hedgehog protein N-product which is the active product of SHH. Interacts with CST3 in a calcium-dependent manner. Interacts with the vitamin-D binding protein GC/DBP. Interacts with sex hormone-binding protein SHBG. Interacts with angiotensin-2. Also interacts with angiotensin 1-7. Interacts with APOM. Interacts with selenoprotein SEPP1. Interacts with LEP. Interacts with ALB. Interacts with the antiapoptotic protein BIRC5/survivin. Interacts with matrix metalloproteinase MMP2 in complex with metalloproteinase inhibitor TIMP1. In neurons, forms a trimeric complex with APP and APPB1/FE65. Interacts with LDLRAP1/ARH; mediates trafficking of LRP2 to the endocytic recycling compartment. Does not interact with beta-amyloid protein 40 alone but interacts with the complex composed of beta-amyloid protein 40 and CLU/APOJ. Interacts with MDK. In terms of processing, a fraction undergoes proteolytic cleavage of the extracellular domain at the cell membrane to generate a cytoplasmic tail fragment. This is internalized into the early endosome from where it trafficks in an LDLRAP1/ARH-dependent manner to the endocytic recycling compartment (ERC). In the ERC, it is further cleaved by gamma-secretase to release a fragment which translocates to the nucleus and mediates transcriptional repression. N-glycosylation is required for ligand binding.

The protein localises to the apical cell membrane. The protein resides in the endosome lumen. Its subcellular location is the membrane. It is found in the clathrin-coated pit. It localises to the cell projection. The protein localises to the dendrite. The protein resides in the axon. Its function is as follows. Multiligand endocytic receptor. Acts together with CUBN to mediate endocytosis of high-density lipoproteins. Mediates receptor-mediated uptake of polybasic drugs such as aprotinin, aminoglycosides and polymyxin B. In the kidney, mediates the tubular uptake and clearance of leptin. Also mediates transport of leptin across the blood-brain barrier through endocytosis at the choroid plexus epithelium. Endocytosis of leptin in neuronal cells is required for hypothalamic leptin signaling and leptin-mediated regulation of feeding and body weight. Mediates endocytosis and subsequent lysosomal degradation of CST3 in kidney proximal tubule cells. Mediates renal uptake of 25-hydroxyvitamin D3 in complex with the vitamin D3 transporter GC/DBP. Mediates renal uptake of metallothionein-bound heavy metals. Together with CUBN, mediates renal reabsorption of myoglobin. Mediates renal uptake and subsequent lysosomal degradation of APOM. Plays a role in kidney selenium homeostasis by mediating renal endocytosis of selenoprotein SEPP1. Mediates renal uptake of the antiapoptotic protein BIRC5/survivin which may be important for functional integrity of the kidney. Mediates renal uptake of matrix metalloproteinase MMP2 in complex with metalloproteinase inhibitor TIMP1. Mediates endocytosis of Sonic hedgehog protein N-product (ShhN), the active product of SHH. Also mediates ShhN transcytosis. In the embryonic neuroepithelium, mediates endocytic uptake and degradation of BMP4, is required for correct SHH localization in the ventral neural tube and plays a role in patterning of the ventral telencephalon. Required at the onset of neurulation to sequester SHH on the apical surface of neuroepithelial cells of the rostral diencephalon ventral midline and to control PTCH1-dependent uptake and intracellular trafficking of SHH. During neurulation, required in neuroepithelial cells for uptake of folate bound to the folate receptor FOLR1 which is necessary for neural tube closure. In the adult brain, negatively regulates BMP signaling in the subependymal zone which enables neurogenesis to proceed. In astrocytes, mediates endocytosis of ALB which is required for the synthesis of the neurotrophic factor oleic acid. Involved in neurite branching. During optic nerve development, required for SHH-mediated migration and proliferation of oligodendrocyte precursor cells. Mediates endocytic uptake and clearance of SHH in the retinal margin which protects retinal progenitor cells from mitogenic stimuli and keeps them quiescent. Plays a role in reproductive organ development by mediating uptake in reproductive tissues of androgen and estrogen bound to the sex hormone binding protein SHBG. Mediates endocytosis of angiotensin-2. Also mediates endocytosis of angiotensis 1-7. Binds to the complex composed of beta-amyloid protein 40 and CLU/APOJ and mediates its endocytosis and lysosomal degradation. Required for embryonic heart development. Required for normal hearing, possibly through interaction with estrogen in the inner ear. This chain is Low-density lipoprotein receptor-related protein 2, found in Sus scrofa (Pig).